Here is a 355-residue protein sequence, read N- to C-terminus: Mitochondrial import inner membrane translocase subunit TIM50 (355 aa).

The N-terminal 44 residues, 1–44 (MAASAAVFLRLRSGLRQGARGLCARLATPPPRAPDQAAEIGSRA), are a transit peptide targeting the mitochondrion. Residues 25–61 (RLATPPPRAPDQAAEIGSRAGTKAQTQGPQQQRSSEG) form a disordered region. Topologically, residues 45 to 67 (GTKAQTQGPQQQRSSEGPSYAKK) are mitochondrial matrix. Residues 47–61 (KAQTQGPQQQRSSEG) show a composition bias toward polar residues. Residues 68 to 88 (VALWLARLLGAGGTVSVIYIF) form a helical membrane-spanning segment. The Mitochondrial intermembrane segment spans residues 89–355 (GNNAVDENGA…SRLWPRSKQP (267 aa)). Residues 145–288 (YYQPPYTLVL…LDLSAFLKTI (144 aa)) form the FCP1 homology domain. S343 bears the Phosphoserine mark.

This sequence belongs to the TIM50 family. As to quaternary structure, component of the TIM23 complex at least composed of TIMM23, TIMM17 (TIMM17A or TIMM17B) and TIMM50; within this complex, directly interacts with TIMM23. The complex interacts with the TIMM44 component of the PAM complex and with DNAJC15.

It localises to the mitochondrion inner membrane. In terms of biological role, essential component of the TIM23 complex, a complex that mediates the translocation of transit peptide-containing proteins across the mitochondrial inner membrane. Has some phosphatase activity in vitro; however such activity may not be relevant in vivo. The protein is Mitochondrial import inner membrane translocase subunit TIM50 (TIMM50) of Bos taurus (Bovine).